The primary structure comprises 1046 residues: Multidrug resistance protein MexB (1046 aa).

The Cytoplasmic segment spans residues 1–9 (MSKFFIDRP). The helical transmembrane segment at 10–28 (IFAWVIALVIMLAGGLSIL) threads the bilayer. Over 29 to 339 (SLPVNQYPAI…TPVVSASIHE (311 aa)) the chain is Periplasmic. The chain crosses the membrane as a helical span at residues 340–359 (VVKTLGEAILLVFLVMYLFL). At 360 to 365 (QNFRAT) the chain is on the cytoplasmic side. Residues 366–385 (LIPTIAVPVVLLGTFGVLAA) form a helical membrane-spanning segment. Residues 386 to 391 (FGFSIN) are Periplasmic-facing. A helical transmembrane segment spans residues 392–413 (TLTMFGMVLAIGLLVDDAIVVV). Topologically, residues 414–441 (ENVERVMAEEGLSPREAARKSMGQIQGA) are cytoplasmic. The helical transmembrane segment at 442 to 460 (LVGIAMVLSAVFLPMAFFG) threads the bilayer. At 461–473 (GSTGVIYRQFSIT) the chain is on the periplasmic side. Residues 474-496 (IVSAMALSVIVALILTPALCATM) form a helical membrane-spanning segment. Over 497–538 (LKPIEKGDHGEHKGGFFGWFNRMFLSTTHGYERGVASILKHR) the chain is Cytoplasmic. A helical membrane pass occupies residues 539-557 (APYLLIYVVIVAGMIWMFT). The Periplasmic portion of the chain corresponds to 558–871 (RIPTAFLPDE…SYEERLSGSQ (314 aa)). Residues 872 to 891 (APALYALSLLVVFLCLAALY) form a helical membrane-spanning segment. Residues 892-897 (ESWSIP) lie on the Cytoplasmic side of the membrane. A helical membrane pass occupies residues 898-917 (FSVMLVVPLGVIGALLATSM). Residues 918–923 (RGLSND) are Periplasmic-facing. The chain crosses the membrane as a helical span at residues 924-945 (VFFQVGLLTTIGLSAKNAILIV). Residues 946–972 (EFAKELHEQGKGIVEAAIEACRMRLRP) are Cytoplasmic-facing. The chain crosses the membrane as a helical span at residues 973 to 991 (IVMTSLAFILGVVPLAIST). Topologically, residues 992–1004 (GAGSGSQHAIGTG) are periplasmic. Residues 1005–1027 (VIGGMVTATVLAIFWVPLFYVAV) traverse the membrane as a helical segment. Over 1028-1046 (STLFKDEASKQQASVEKGQ) the chain is Cytoplasmic.

This sequence belongs to the resistance-nodulation-cell division (RND) (TC 2.A.6) family. As to quaternary structure, component of the MexAB-OprM multidrug efflux complex, composed of six MexA subunits forming a hexameric tube, binding to a MexB trimer, which interact with the trimeric OprM outer membrane channel protein. OprM is thought to not directly contact MexB; instead, MexA joins MexB and OprM by forming a funnel-like hexamer anchored to the inner membrane. MexA may initially form a hexameric ring complex with MexB prior to OprM, then OprM undergoes a conformational change as it contacts MexA, allowing the periplasmic gate to open. It is thought that, under high intracellular substrate concentration, MexB ejects substrate into the tunnel formed by MexA-OprM; as the substrate level declines, conformational changes in MexB cause efflux to reduce and stop and the complex shifts to the closed state. Acts as a substrate:proton antiporter and activity is enhanced significantly when in complex with MexA and OprM, in vitro.

It is found in the cell inner membrane. Its activity is regulated as follows. Export of antibiotics and solvents is dramatically decreased in the presence of the protonophore carbonyl cyanide m-chlorophenylhydrazone (CCCP), therefore may be driven by a proton gradient. Antibiotic efflux is inhibited by pyridopyrimidine derivatives, such as ABI-PP, acting by binding to a hydrophobic pocket in MexB. Functionally, the inner membrane transporter component of the MexAB-OprM efflux system that confers multidrug resistance. Functions as the major efflux pump for n-hexane and p-xylene efflux. Has been shown in one study to be involved in the active efflux of the autoinducer N-(3-oxododecanoyl) homoserine lactone, thereby playing an indirect role in quorum-sensing; but has been shown in another study not to be involved in efflux of this autoinducer. Over-expression of the pump increases antibiotic and solvent efflux capacities. Implicated in the secretion of the siderophore pyoverdine. The sequence is that of Multidrug resistance protein MexB (mexB) from Pseudomonas aeruginosa (strain ATCC 15692 / DSM 22644 / CIP 104116 / JCM 14847 / LMG 12228 / 1C / PRS 101 / PAO1).